Here is a 506-residue protein sequence, read N- to C-terminus: NAD(P)H-quinone oxidoreductase subunit 2 (506 aa).

14 helical membrane-spanning segments follow: residues 14-34 (AIIP…VDLA), 42-62 (WAPV…ALQW), 79-99 (LAIA…LISW), 108-128 (PIGE…LLCG), 132-152 (LVSV…LSGY), 167-187 (LLVG…LYGL), 206-226 (FITS…IAAV), 240-260 (PTPV…AFAI), 276-296 (LLFT…ALAQ), 302-322 (MLAY…VSGT), 330-350 (VLYL…VILF), 374-394 (LGLS…GFFG), 409-429 (LLVV…ISVI), and 462-482 (IALY…NPLF).

This sequence belongs to the complex I subunit 2 family. In terms of assembly, NDH-1 can be composed of about 15 different subunits; different subcomplexes with different compositions have been identified which probably have different functions.

The protein resides in the cellular thylakoid membrane. The enzyme catalyses a plastoquinone + NADH + (n+1) H(+)(in) = a plastoquinol + NAD(+) + n H(+)(out). The catalysed reaction is a plastoquinone + NADPH + (n+1) H(+)(in) = a plastoquinol + NADP(+) + n H(+)(out). In terms of biological role, NDH-1 shuttles electrons from an unknown electron donor, via FMN and iron-sulfur (Fe-S) centers, to quinones in the respiratory and/or the photosynthetic chain. The immediate electron acceptor for the enzyme in this species is believed to be plastoquinone. Couples the redox reaction to proton translocation, and thus conserves the redox energy in a proton gradient. Cyanobacterial NDH-1 also plays a role in inorganic carbon-concentration. The polypeptide is NAD(P)H-quinone oxidoreductase subunit 2 (Prochlorococcus marinus subsp. pastoris (strain CCMP1986 / NIES-2087 / MED4)).